A 166-amino-acid chain; its full sequence is SUMO-conjugating enzyme UBC9 (166 aa).

The UBC core domain occupies 4–157 (IAAGRLAEER…VKKEAVKYAA (154 aa)). Residue Cys93 is the Glycyl thioester intermediate of the active site.

Belongs to the ubiquitin-conjugating enzyme family. Interacts with brd-1 and rad-51. Interacts with smo-1 and sop-2. Interacts with bet-1 (via BROMO domain 2). Interacts with isoforms 1 and 2 of X-box-binding protein xbp-1.

It is found in the nucleus envelope. Its pathway is protein modification; protein sumoylation. Accepts the ubiquitin-like protein smo-1 from the aos-1-uba-2 E1 complex and catalyzes its covalent attachment to other proteins with the help of an E3 ligase such as gei-17. Required to sumoylate the ETS transcription factor lin-1, Polycomb protein sop-2, and intermediate filament proteins, such as ifb-1. Required for embryonic development, fertility, vulval morphogenesis, inhibition of vulval cell fates, lifespan, and neuromuscular activity. The protein is SUMO-conjugating enzyme UBC9 of Caenorhabditis elegans.